A 130-amino-acid polypeptide reads, in one-letter code: Small ribosomal subunit protein uS11 (130 aa).

It belongs to the universal ribosomal protein uS11 family. In terms of assembly, part of the 30S ribosomal subunit. Interacts with proteins S7 and S18. Binds to IF-3.

Located on the platform of the 30S subunit, it bridges several disparate RNA helices of the 16S rRNA. Forms part of the Shine-Dalgarno cleft in the 70S ribosome. This chain is Small ribosomal subunit protein uS11, found in Shewanella denitrificans (strain OS217 / ATCC BAA-1090 / DSM 15013).